The following is a 673-amino-acid chain: Ion-translocating oxidoreductase complex subunit C (673 aa).

4Fe-4S ferredoxin-type domains lie at 368 to 397 (MGAP…QQLY) and 407 to 436 (KATA…VQYF). [4Fe-4S] cluster-binding residues include cysteine 377, cysteine 380, cysteine 383, cysteine 387, cysteine 416, cysteine 419, cysteine 422, and cysteine 426. Disordered regions lie at residues 534 to 553 (QARA…SGGA) and 563 to 653 (IARA…AAVA).

It belongs to the 4Fe4S bacterial-type ferredoxin family. RnfC subfamily. In terms of assembly, the complex is composed of six subunits: RsxA, RsxB, RsxC, RsxD, RsxE and RsxG. [4Fe-4S] cluster serves as cofactor.

It localises to the cell inner membrane. In terms of biological role, part of a membrane-bound complex that couples electron transfer with translocation of ions across the membrane. Required to maintain the reduced state of SoxR. The protein is Ion-translocating oxidoreductase complex subunit C of Salmonella gallinarum (strain 287/91 / NCTC 13346).